The primary structure comprises 96 residues: uncharacterized protein (96 aa).

This is an uncharacterized protein from Invertebrate iridescent virus 6 (IIV-6).